The chain runs to 305 residues: tRNA pseudouridine synthase B (305 aa).

D39 acts as the Nucleophile in catalysis.

Belongs to the pseudouridine synthase TruB family. Type 1 subfamily.

The catalysed reaction is uridine(55) in tRNA = pseudouridine(55) in tRNA. Its function is as follows. Responsible for synthesis of pseudouridine from uracil-55 in the psi GC loop of transfer RNAs. This is tRNA pseudouridine synthase B from Staphylococcus aureus (strain MSSA476).